We begin with the raw amino-acid sequence, 750 residues long: Photosystem I P700 chlorophyll a apoprotein A1 (750 aa).

The next 8 membrane-spanning stretches (helical) occupy residues 70–93, 156–179, 195–219, 291–309, 346–369, 385–411, 433–455, and 531–549; these read VFSAHFGQLSIIFLWLSGMYFHGA, LYCTAIGALVFAALMLFAGWFHYH, LNHHLAGLLGLGSLSWAGHQIHVSL, IAHHHLAIAILFLIAGHMY, WHAQLSLNLAMLGSTTIVVAHHMY, LSLFTHHMWIGGFLIVGAAAHAAIFMV, AIISHLNWVCIFLGFHSFGLYIH, and FLVHHIHAFTIHVTVLILL. [4Fe-4S] cluster is bound by residues Cys573 and Cys582. The next 2 membrane-spanning stretches (helical) occupy residues 589-610 and 664-686; these read HVFLGLFWMYNAISVVIFHFSW and LSAYGLFFLGAHFVWAFSLMFLF. A chlorophyll a'-binding site is contributed by His675. The chlorophyll a site is built by Met683 and Tyr691. Phylloquinone is bound at residue Trp692. The chain crosses the membrane as a helical span at residues 724-744; it reads AVGVTHYLLGGIATTWAFFLA.

Belongs to the PsaA/PsaB family. As to quaternary structure, the PsaA/B heterodimer binds the P700 chlorophyll special pair and subsequent electron acceptors. PSI consists of a core antenna complex that captures photons, and an electron transfer chain that converts photonic excitation into a charge separation. The eukaryotic PSI reaction center is composed of at least 11 subunits. Requires P700 is a chlorophyll a/chlorophyll a' dimer, A0 is one or more chlorophyll a, A1 is one or both phylloquinones and FX is a shared 4Fe-4S iron-sulfur center. as cofactor.

The protein localises to the plastid. Its subcellular location is the chloroplast thylakoid membrane. It catalyses the reaction reduced [plastocyanin] + hnu + oxidized [2Fe-2S]-[ferredoxin] = oxidized [plastocyanin] + reduced [2Fe-2S]-[ferredoxin]. Functionally, psaA and PsaB bind P700, the primary electron donor of photosystem I (PSI), as well as the electron acceptors A0, A1 and FX. PSI is a plastocyanin-ferredoxin oxidoreductase, converting photonic excitation into a charge separation, which transfers an electron from the donor P700 chlorophyll pair to the spectroscopically characterized acceptors A0, A1, FX, FA and FB in turn. Oxidized P700 is reduced on the lumenal side of the thylakoid membrane by plastocyanin. The sequence is that of Photosystem I P700 chlorophyll a apoprotein A1 from Hordeum vulgare (Barley).